A 597-amino-acid polypeptide reads, in one-letter code: Scarecrow-like protein 5 (597 aa).

A disordered region spans residues 111–172 (ESSSGTKSHP…SPLSGSSATN (62 aa)). The segment covering 123 to 169 (NNKNNSSSTTSFSSNESPISQANNNNLSRFNNHSPEENNNSPLSGSS) has biased composition (low complexity). The GRAS domain maps to 218–597 (SMEMISRGDL…QPLITSCAWR (380 aa)). Residues 225–285 (GDLKGVLYEC…VARLASSGSS (61 aa)) form a leucine repeat I (LRI) region. The VHIID stretch occupies residues 304 to 369 (MHILYEACPY…GGPPNVRITG (66 aa)). Positions 335–339 (VHIID) match the VHIID motif. The leucine repeat II (LRII) stretch occupies residues 385 to 417 (LVGQRLGKLAEMCGVPFEFHGAALCCTEVEIEK). The PFYRE stretch occupies residues 426–520 (LAVNFPLVLH…QHCLAREVVN (95 aa)). The interval 523 to 597 (ACEGVEREER…QPLITSCAWR (75 aa)) is SAW.

This sequence belongs to the GRAS family. Expressed in seedlings, roots, shoots, leaves, flowers and siliques.

It localises to the nucleus. Functionally, probable transcription factor involved in plant development. The chain is Scarecrow-like protein 5 (SCL5) from Arabidopsis thaliana (Mouse-ear cress).